Reading from the N-terminus, the 301-residue chain is NADH-cytochrome b5 reductase 3 (301 aa).

The N-myristoyl glycine moiety is linked to residue Gly2. Positions 40-152 (DIKYPLRLID…RGPSGLLVYQ (113 aa)) constitute an FAD-binding FR-type domain. Position 42 is an N6-acetyllysine (Lys42). The residue at position 43 (Tyr43) is a Phosphotyrosine. FAD contacts are provided by Arg92, Pro93, Tyr94, Val109, Lys111, and Phe114. Lys120 carries the N6-acetyllysine modification. The FAD site is built by Lys126, Met127, Ser128, and Thr185.

This sequence belongs to the flavoprotein pyridine nucleotide cytochrome reductase family. Component of a complex composed of cytochrome b5, NADH-cytochrome b5 reductase (CYB5R3) and MTARC2. Interacts with MTLN; the interaction is required to maintain cellular lipid composition and leads to stimulation of mitochondrial respiratory complex I activity. Requires FAD as cofactor. Expressed at late stages of erythroid maturation.

Its subcellular location is the endoplasmic reticulum membrane. It localises to the mitochondrion outer membrane. The protein resides in the cytoplasm. It carries out the reaction 2 Fe(III)-[cytochrome b5] + NADH = 2 Fe(II)-[cytochrome b5] + NAD(+) + H(+). Its function is as follows. Catalyzes the reduction of two molecules of cytochrome b5 using NADH as the electron donor. The polypeptide is NADH-cytochrome b5 reductase 3 (Homo sapiens (Human)).